The sequence spans 240 residues: Probable Ni/Fe-hydrogenase B-type cytochrome subunit (240 aa).

Transmembrane regions (helical) follow at residues 31–51 (LWHWVTALSIVVLGVTGYFIG), 75–95 (FAAGYVLAIGFLGRVYWAFVG), 142–163 (LAMFCFFVVGAVFMSVTGFALY), and 196–213 (LGMWYLVVFVMVHVYLAV).

Belongs to the HupC/HyaC/HydC family.

Its subcellular location is the cell membrane. Its function is as follows. Probable b-type cytochrome. This Azotobacter vinelandii protein is Probable Ni/Fe-hydrogenase B-type cytochrome subunit (hoxZ).